The primary structure comprises 285 residues: Small ribosomal subunit protein uS2 (285 aa).

The tract at residues 229-285 (AGLASGDAKPEAGAGEPLAEWEQELLAQANPNAEGSAEAAPAAATEEAPAAQTPADF) is disordered. Residues 257–285 (ANPNAEGSAEAAPAAATEEAPAAQTPADF) show a composition bias toward low complexity.

The protein belongs to the universal ribosomal protein uS2 family.

The polypeptide is Small ribosomal subunit protein uS2 (Nocardia farcinica (strain IFM 10152)).